Here is a 327-residue protein sequence, read N- to C-terminus: 2-oxoisovalerate dehydrogenase subunit beta (327 aa).

Thiamine diphosphate is bound by residues glutamate 29, 58-60 (LAE), glutamine 82, and 86-89 (FIMP). Substrate is bound by residues 83–86 (FADF) and histidine 129. The Proton acceptor role is filled by histidine 129.

As to quaternary structure, heterotetramer of two alpha and two beta chains. Directly associated with ODBA in the E1 complex. It depends on thiamine diphosphate as a cofactor.

It carries out the reaction N(6)-[(R)-lipoyl]-L-lysyl-[protein] + 3-methyl-2-oxobutanoate + H(+) = N(6)-[(R)-S(8)-2-methylpropanoyldihydrolipoyl]-L-lysyl-[protein] + CO2. Its function is as follows. The branched-chain alpha-keto dehydrogenase complex catalyzes the overall conversion of alpha-keto acids to acyl-CoA and CO(2). It contains multiple copies of three enzymatic components: branched-chain alpha-keto acid decarboxylase (E1), lipoamide acyltransferase (E2) and lipoamide dehydrogenase (E3). This Bacillus subtilis (strain 168) protein is 2-oxoisovalerate dehydrogenase subunit beta (bfmBAB).